The sequence spans 74 residues: Tau-AnmTx Ueq 12-1 (74 aa).

The N-terminal stretch at 1–18 (MCLLMLVLGAMYVQGWHS) is a signal peptide. Positions 19 to 27 (AGFGKRTLK) are cleaved as a propeptide — removed in mature form. Disulfide bonds link Cys-30–Cys-37, Cys-40–Cys-71, Cys-46–Cys-64, Cys-51–Cys-72, and Cys-58–Cys-73.

Belongs to the Cnidaria small cysteine-rich protein (SCRiP) family. Detected in mucus secreted from ectoderm.

It localises to the secreted. Functionally, potentiates activation of mammalian TRPA1, a non-selective cation channel involved in perception of pain, in vitro yet has an analgesic and anti-inflammatory effect in vivo. Has antibacterial activity against C.glutamicum (MIC=50 uM) and, to a lesser extent, against S.aureus but not against P.aeruginosa or E.coli. In Urticina eques (Sea anemone), this protein is Tau-AnmTx Ueq 12-1.